Reading from the N-terminus, the 360-residue chain is Probable L-asparaginase 3 (360 aa).

The N-terminal stretch at 1–16 (MWSSIISFLFFSVALC) is a signal peptide. N-linked (GlcNAc...) asparagine glycosylation is found at Asn-27, Asn-35, and Asn-40. Positions 39-359 (PNVTIFAMGG…QNITDIFSLE (321 aa)) constitute an Asparaginase/glutaminase domain. Thr-49 acts as the O-isoaspartyl threonine intermediate in catalysis. N-linked (GlcNAc...) asparagine glycosylation occurs at Asn-82. Position 96 (Ser-96) interacts with substrate. N-linked (GlcNAc...) asparagine glycosylation is present at Asn-106. 129-130 (TD) contributes to the substrate binding site. N-linked (GlcNAc...) asparagine glycans are attached at residues Asn-144, Asn-179, Asn-246, Asn-302, and Asn-351.

The protein belongs to the asparaginase 1 family.

The protein resides in the secreted. It is found in the cell wall. It catalyses the reaction L-asparagine + H2O = L-aspartate + NH4(+). The chain is Probable L-asparaginase 3 from Schizosaccharomyces pombe (strain 972 / ATCC 24843) (Fission yeast).